A 520-amino-acid polypeptide reads, in one-letter code: Glucose-6-phosphate isomerase (520 aa).

Glu327 (proton donor) is an active-site residue. Residues His358 and Lys486 contribute to the active site.

It belongs to the GPI family.

It is found in the cytoplasm. The catalysed reaction is alpha-D-glucose 6-phosphate = beta-D-fructose 6-phosphate. The protein operates within carbohydrate biosynthesis; gluconeogenesis. It participates in carbohydrate degradation; glycolysis; D-glyceraldehyde 3-phosphate and glycerone phosphate from D-glucose: step 2/4. Catalyzes the reversible isomerization of glucose-6-phosphate to fructose-6-phosphate. The polypeptide is Glucose-6-phosphate isomerase (Bordetella avium (strain 197N)).